The chain runs to 165 residues: uncharacterized protein (165 aa).

Belongs to the SixA phosphatase family.

This is an uncharacterized protein from Picosynechococcus sp. (strain ATCC 27264 / PCC 7002 / PR-6) (Agmenellum quadruplicatum).